The chain runs to 506 residues: Glutamate--tRNA ligase (506 aa).

Residues 21-31 carry the 'HIGH' region motif; that stretch reads PSPTGIPHVGM. Residues 265-269 carry the 'KMSKS' region motif; sequence KLSKR. Lys268 lines the ATP pocket.

This sequence belongs to the class-I aminoacyl-tRNA synthetase family. Glutamate--tRNA ligase type 1 subfamily. In terms of assembly, monomer.

Its subcellular location is the cytoplasm. It catalyses the reaction tRNA(Glu) + L-glutamate + ATP = L-glutamyl-tRNA(Glu) + AMP + diphosphate. Functionally, catalyzes the attachment of glutamate to tRNA(Glu) in a two-step reaction: glutamate is first activated by ATP to form Glu-AMP and then transferred to the acceptor end of tRNA(Glu). The protein is Glutamate--tRNA ligase of Bifidobacterium adolescentis (strain ATCC 15703 / DSM 20083 / NCTC 11814 / E194a).